Consider the following 511-residue polypeptide: MSDHAMNEQRDHDTRLRAWRTGIDTYQEPIVYMRSDCVVCRSEGFTTQTRVLLTAGTRSAVATLNVVEGNWLAPGVAGLSEAAWHALDPAADAWINVSYAPTLDSLSHVRAKVYGHRLDAGAFNAVIGDVAAGRYSDLYLAAFVTACAGDRLDLSETVALTRAMVAVGHRLDWGRETVVDKHCVGGLPGNRTTLLVVPIVAACGLTMPKTSSRAITSPAGTADTMEVLAPVNLDIAAMRRTVERTGGCIVWGGSVRLSPADDVLIRVERPLDLDSEGQLVASVLSKKAAAGSTHVLIDLPVGPTAKVRSTEAAQSLGRRLVEVGRAIGLQVTLRITDGLQPVGRGVGPALEARDVLAVLRGQADAPDDLRQRALRLAGDILELGGAAPNGSGLQLAAEVLADGRAWAKFQAICEAQGGLREVPVTPYRQVITAAVAGRVAAIDNRVLARAAKLAGAPKAPAAGVDVHARIGDPVQAGQPLFTLHAQTAGELDYAGHFVDTRPPIFQISEEA.

This sequence belongs to the thymidine/pyrimidine-nucleoside phosphorylase family. Type 2 subfamily.

It catalyses the reaction thymidine + phosphate = 2-deoxy-alpha-D-ribose 1-phosphate + thymine. The protein is Putative thymidine phosphorylase 1 of Acidovorax sp. (strain JS42).